The sequence spans 573 residues: Septation ring formation regulator EzrA (573 aa).

Residues 1–2 (MQ) are Extracellular-facing. Residues 3-21 (VAIGIVVVAIVIYAAVKGF) traverse the membrane as a helical segment. Topologically, residues 22–573 (QFYIDKQVRQ…KQADKMNDEA (552 aa)) are cytoplasmic. Coiled-coil stretches lie at residues 100–188 (DAQQ…LAKA), 317–364 (LTHA…VYQA), and 416–488 (ETLQ…TLKE).

The protein belongs to the EzrA family.

The protein resides in the cell membrane. Negative regulator of FtsZ ring formation; modulates the frequency and position of FtsZ ring formation. Inhibits FtsZ ring formation at polar sites. Interacts either with FtsZ or with one of its binding partners to promote depolymerization. This Lactiplantibacillus plantarum (strain ATCC BAA-793 / NCIMB 8826 / WCFS1) (Lactobacillus plantarum) protein is Septation ring formation regulator EzrA.